The chain runs to 95 residues: Co-chaperonin GroES (95 aa).

Belongs to the GroES chaperonin family. Heptamer of 7 subunits arranged in a ring. Interacts with the chaperonin GroEL.

It is found in the cytoplasm. In terms of biological role, together with the chaperonin GroEL, plays an essential role in assisting protein folding. The GroEL-GroES system forms a nano-cage that allows encapsulation of the non-native substrate proteins and provides a physical environment optimized to promote and accelerate protein folding. GroES binds to the apical surface of the GroEL ring, thereby capping the opening of the GroEL channel. The sequence is that of Co-chaperonin GroES from Pelobacter propionicus (strain DSM 2379 / NBRC 103807 / OttBd1).